A 610-amino-acid polypeptide reads, in one-letter code: L-galactono-1,4-lactone dehydrogenase, mitochondrial (610 aa).

Residues 1 to 35 constitute a mitochondrion transit peptide; that stretch reads MLRSLLLRRSVGHSLGTLSPSSSTIRSSFSPHRTL. The tract at residues 17-61 is disordered; that stretch reads TLSPSSSTIRSSFSPHRTLCTTGQTLTPPPPPPPRPPPPPPATAS. Over residues 19 to 30 the composition is skewed to low complexity; sequence SPSSSTIRSSFS. Residues 36 to 101 constitute a propeptide, removed in mature form; sequence CTTGQTLTPP…AKHKKAQIFR (66 aa). The segment covering 43-58 has biased composition (pro residues); sequence TPPPPPPPRPPPPPPA. The helical transmembrane segment at 68-84 threads the bilayer; it reads YAGYAALAIFSGVATYF. Positions 123–258 constitute an FAD-binding PCMH-type domain; it reads TRNFNQPENL…TPAKGTIELS (136 aa).

The cofactor is FAD.

The protein resides in the mitochondrion membrane. The enzyme catalyses L-galactono-1,4-lactone + 4 Fe(III)-[cytochrome c] = L-dehydroascorbate + 4 Fe(II)-[cytochrome c] + 5 H(+). The catalysed reaction is L-gulono-1,4-lactone + 2 Fe(III)-[cytochrome c] = L-ascorbate + 2 Fe(II)-[cytochrome c] + 3 H(+). The protein operates within cofactor biosynthesis; L-ascorbate biosynthesis. Its function is as follows. Involved in the biosynthesis of ascorbate. Catalyzes the final step of ascorbate biosynthesis. Uses L-galactono-1,4-lactone and L-gulono-1,4-lactone as substrates, but not D-galactono-1,4-lactone, D-gulono-1,4-lactone, L-mannono-1,4-lactone or D-galactonic acid. Also active with phenazine methosulfate and 1,4-benzoquinone as electron acceptors. Involved in the regulation of the accumulation of the mitochondrial respiratory complex I. Structural part of one of the plant-specific mitochondrial complex I assembly intermediates, lacking the whole distal (PD) module. Prevents the binding of the plant specific P1 protein (CPN60/HSP60), responsible for the linkage of the proximal (PP) to the distal (PD) module. This chain is L-galactono-1,4-lactone dehydrogenase, mitochondrial, found in Arabidopsis thaliana (Mouse-ear cress).